A 487-amino-acid chain; its full sequence is N-succinylglutamate 5-semialdehyde dehydrogenase (487 aa).

221–226 (GSSDTG) is a binding site for NAD(+). Residues E244 and C278 contribute to the active site.

It belongs to the aldehyde dehydrogenase family. AstD subfamily.

It catalyses the reaction N-succinyl-L-glutamate 5-semialdehyde + NAD(+) + H2O = N-succinyl-L-glutamate + NADH + 2 H(+). The protein operates within amino-acid degradation; L-arginine degradation via AST pathway; L-glutamate and succinate from L-arginine: step 4/5. Functionally, catalyzes the NAD-dependent reduction of succinylglutamate semialdehyde into succinylglutamate. This chain is N-succinylglutamate 5-semialdehyde dehydrogenase, found in Burkholderia orbicola (strain MC0-3).